The following is a 238-amino-acid chain: Dof zinc finger protein MNB1A (238 aa).

The span at 1 to 13 (MQEASSAAAAGAE) shows a compositional bias: low complexity. The segment at 1 to 48 (MQEASSAAAAGAEPGRRAAQHQFAGVDLRRPKGYAAPAPAPAVGEGDP) is disordered. The Dof-type zinc-finger motif lies at 47-101 (DPCPRCASRDTKFCYYNNYNTSQPRHFCKGCRRYWTKGGTLRNVPVGGGTRKKPS). Positions 49, 52, 74, and 77 each coordinate Zn(2+). The disordered stretch occupies residues 85 to 155 (GTLRNVPVGG…TATTTTTTSE (71 aa)). The span at 119–130 (PKKKPASKKRRV) shows a compositional bias: basic residues. Residues 138–155 (ATAADPGKTATTTTTTSE) show a composition bias toward low complexity.

In terms of tissue distribution, expressed in all tissues examined.

The protein localises to the nucleus. Functionally, transcription factor that binds specifically to a 5'-AA[AG]G-3' consensus core sequence at the MNF1-binding site. The polypeptide is Dof zinc finger protein MNB1A (MNB1A) (Zea mays (Maize)).